The following is a 365-amino-acid chain: Prostaglandin E2 receptor EP3 subtype (365 aa).

Positions 1–22 (MASMWAPEHSAEAHSNLSSTTD) are disordered. The Extracellular segment spans residues 1–30 (MASMWAPEHSAEAHSNLSSTTDDCGSVSVA). Over residues 13-22 (AHSNLSSTTD) the composition is skewed to polar residues. Asn16 carries an N-linked (GlcNAc...) asparagine glycan. A helical transmembrane segment spans residues 31–55 (FPITMMVTGFVGNALAMLLVSRSYR). Residues 56–68 (RRESKRKKSFLLC) lie on the Cytoplasmic side of the membrane. The helical transmembrane segment at 69–89 (IGWLALTDLVGQLLTSPVVIL) threads the bilayer. Residues 90 to 108 (VYLSQRRWEQLDPSGRLCT) lie on the Extracellular side of the membrane. An intrachain disulfide couples Cys107 to Cys184. The chain crosses the membrane as a helical span at residues 109 to 130 (FFGLTMTVFGLSSLLVASAMAV). Topologically, residues 131 to 151 (ERALAIRAPHWYASHMKTRAT) are cytoplasmic. A helical transmembrane segment spans residues 152–173 (PVLLGVWLSVLAFALLPVLGVG). Residues 174-203 (RYSVQWPGTWCFISTGPAGNETDPAREPGS) lie on the Extracellular side of the membrane. Asn193 carries N-linked (GlcNAc...) asparagine glycosylation. Residues 204 to 229 (VAFASAFACLGLLALVVTFACNLATI) traverse the membrane as a helical segment. The Cytoplasmic portion of the chain corresponds to 230 to 259 (KALVSRCRAKAAVSQSSAQWGRITTETAIQ). The chain crosses the membrane as a helical span at residues 260–283 (LMGIMCVLSVCWSPLLIMMLKMIF). At 284-303 (NQMSVEQCKTQMGKEKECNS) the chain is on the extracellular side. A helical membrane pass occupies residues 304–325 (FLIAVRLASLNQILDPWVYLLL). Residues 326 to 365 (RKILLRKFCQIRDHTNYASSSTSLPCPGSSALMWSDQLER) are Cytoplasmic-facing.

This sequence belongs to the G-protein coupled receptor 1 family. In terms of assembly, interacts (via C-terminus) with MKLN1. Post-translationally, ligand binding is affected by cAMP-dependent phosphorylation in brain membranes. Detected in platelets. Kidney, uterus, and mastocytoma cells, and in a lesser amount in brain, thymus, lung, heart, stomach and spleen.

The protein resides in the cell membrane. Its function is as follows. Receptor for prostaglandin E2 (PGE2). Required for normal development of fever in response to pyrinogens, including IL1B, prostaglandin E2 and bacterial lipopolysaccharide (LPS). Required for normal potentiation of platelet aggregation by prostaglandin E2, and thus plays a role in the regulation of blood coagulation. Required for increased HCO3(-) secretion in the duodenum in response to mucosal acidification, and thereby contributes to the protection of the mucosa against acid-induced ulceration. Not required for normal kidney function, normal urine volume and osmolality. In terms of biological role, receptor for prostaglandin E2 (PGE2); ligand binding activates a signaling cascade via G(i) proteins that leads to inhibition of adenylate cyclase. Shows high agonist-independent constitutive inhibition of adenylate cyclase. Receptor for prostaglandin E2 (PGE2); ligand binding activates a signaling cascade via G(i) proteins that leads to inhibition of adenylate cyclase. Requires much higher ligand concentrations than isoform Alpha for activation. Does not display agonist-independent constitutive inhibition of adenylate cyclase. Functionally, receptor for prostaglandin E2 (PGE2); ligand binding can activate several distinct signaling cascades, resulting in activation or inhibition of adenylate cyclase. This chain is Prostaglandin E2 receptor EP3 subtype (Ptger3), found in Mus musculus (Mouse).